The following is a 239-amino-acid chain: LexA repressor (239 aa).

The segment at residues 26–46 (FDEMKDALDLASKSGIHRLIT) is a DNA-binding region (H-T-H motif). Active-site for autocatalytic cleavage activity residues include Ser159 and Lys197.

This sequence belongs to the peptidase S24 family. Homodimer.

The catalysed reaction is Hydrolysis of Ala-|-Gly bond in repressor LexA.. In terms of biological role, represses a number of genes involved in the response to DNA damage (SOS response), including recA and lexA. In the presence of single-stranded DNA, RecA interacts with LexA causing an autocatalytic cleavage which disrupts the DNA-binding part of LexA, leading to derepression of the SOS regulon and eventually DNA repair. The chain is LexA repressor from Allorhizobium ampelinum (strain ATCC BAA-846 / DSM 112012 / S4) (Agrobacterium vitis (strain S4)).